A 389-amino-acid chain; its full sequence is Elongation factor Tu-3 (389 aa).

The region spanning 10–203 is the tr-type G domain; it reads KPHLNIGTMG…AVDTYVPMPE (194 aa). Residues 19–26 form a G1 region; it reads GHVDHGKT. Residue 19–26 participates in GTP binding; that stretch reads GHVDHGKT. Thr-26 lines the Mg(2+) pocket. Residues 60-64 are G2; the sequence is GITIN. Residues 81 to 84 are G3; sequence DMPG. GTP is bound by residues 81 to 85 and 136 to 139; these read DMPGH and NKAD. Positions 136–139 are G4; the sequence is NKAD. Residues 173–175 are G5; it reads SGL.

Belongs to the TRAFAC class translation factor GTPase superfamily. Classic translation factor GTPase family. EF-Tu/EF-1A subfamily. As to quaternary structure, monomer.

It is found in the cytoplasm. It catalyses the reaction GTP + H2O = GDP + phosphate + H(+). GTP hydrolase that promotes the GTP-dependent binding of aminoacyl-tRNA to the A-site of ribosomes during protein biosynthesis. This Streptomyces ramocissimus protein is Elongation factor Tu-3.